A 181-amino-acid polypeptide reads, in one-letter code: Lipoprotein signal peptidase (181 aa).

Helical transmembrane passes span 25–45 (LFYK…QVFI), 86–106 (LVYF…VFMV), and 107–127 (KYSY…NFFD). Residues aspartate 138 and aspartate 153 contribute to the active site. Residues 149-169 (FNFADCCITFGFIGLFFCFLI) traverse the membrane as a helical segment.

The protein belongs to the peptidase A8 family.

The protein resides in the cell membrane. It catalyses the reaction Release of signal peptides from bacterial membrane prolipoproteins. Hydrolyzes -Xaa-Yaa-Zaa-|-(S,diacylglyceryl)Cys-, in which Xaa is hydrophobic (preferably Leu), and Yaa (Ala or Ser) and Zaa (Gly or Ala) have small, neutral side chains.. The protein operates within protein modification; lipoprotein biosynthesis (signal peptide cleavage). In terms of biological role, this protein specifically catalyzes the removal of signal peptides from prolipoproteins. The protein is Lipoprotein signal peptidase of Mycoplasma genitalium (strain ATCC 33530 / DSM 19775 / NCTC 10195 / G37) (Mycoplasmoides genitalium).